A 286-amino-acid chain; its full sequence is E3 ubiquitin-protein ligase RNF170 (286 aa).

Residues 1–52 (MQRYWRFQDNKIQDICFGVLGESWIQRPVMARYYSEGQSLQQDDSFIEGVSD) lie on the Lumenal side of the membrane. A helical transmembrane segment spans residues 53-73 (QVLVAVVVSLALTATLLYALL). The Cytoplasmic segment spans residues 74–229 (RNVQQNIHPE…GGLFWMFRIR (156 aa)). The segment at 115–158 (CPICLHQASFPVETNCGHLFCGSCIIAYWRYGSWLGAISCPICR) adopts an RING-type zinc-finger fold. The helical transmembrane segment at 230-250 (IMLCLMGAFFYLISPLDFVPE) threads the bilayer. A topological domain (lumenal) is located at residue Ala-251. The chain crosses the membrane as a helical span at residues 252–272 (LFGILGFLDDFFVIFLLLIYI). At 273 to 286 (SIMYREVITQRLTR) the chain is on the cytoplasmic side.

As to quaternary structure, constitutively associated with the ERLIN1/ERLIN 2 complex. Interacts with activated ITPR1.

The protein localises to the endoplasmic reticulum membrane. It carries out the reaction S-ubiquitinyl-[E2 ubiquitin-conjugating enzyme]-L-cysteine + [acceptor protein]-L-lysine = [E2 ubiquitin-conjugating enzyme]-L-cysteine + N(6)-ubiquitinyl-[acceptor protein]-L-lysine.. Its pathway is protein modification; protein ubiquitination. E3 ubiquitin-protein ligase that plays an essential role in stimulus-induced inositol 1,4,5-trisphosphate receptor type 1 (ITPR1) ubiquitination and degradation via the endoplasmic reticulum-associated degradation (ERAD) pathway. Also involved in ITPR1 turnover in resting cells. Selectively inhibits the TLR3-triggered innate immune response by promoting the 'Lys-48'-linked polyubiquitination and degradation of TLR3. This is E3 ubiquitin-protein ligase RNF170 (Rnf170) from Mus musculus (Mouse).